The following is an 855-amino-acid chain: uncharacterized protein (855 aa).

Transmembrane regions (helical) follow at residues 24–44 (PFQY…IVAI), 256–276 (AFTV…IFLI), 318–338 (IGTG…IGLV), 361–381 (LLKG…PPAI), 404–424 (LMPW…LMLW), 430–450 (LVVA…IAPP), 487–507 (IAIA…ISVG), 725–745 (ITIA…LSAL), 780–800 (MGGM…WILV), and 821–841 (FLRA…YPAW).

The protein belongs to the ABC-4 integral membrane protein family. In terms of assembly, the complex is probably composed of two ATP-binding proteins (Rv0986) and two transmembrane proteins (Rv0987).

It localises to the cell membrane. Probably part of an ABC transporter complex involved in host cell binding either through secretion of an adherence factor or through maintaining the architecture and integrity of the mycobacterial cell envelope. Could be required for host endothelial-cell invasion and/or intracellular survival. This is an uncharacterized protein from Mycobacterium tuberculosis (strain ATCC 25618 / H37Rv).